A 108-amino-acid chain; its full sequence is Phosphoribosyl-ATP pyrophosphatase (108 aa).

This sequence belongs to the PRA-PH family.

The protein resides in the cytoplasm. The catalysed reaction is 1-(5-phospho-beta-D-ribosyl)-ATP + H2O = 1-(5-phospho-beta-D-ribosyl)-5'-AMP + diphosphate + H(+). The protein operates within amino-acid biosynthesis; L-histidine biosynthesis; L-histidine from 5-phospho-alpha-D-ribose 1-diphosphate: step 2/9. The sequence is that of Phosphoribosyl-ATP pyrophosphatase from Trichlorobacter lovleyi (strain ATCC BAA-1151 / DSM 17278 / SZ) (Geobacter lovleyi).